A 522-amino-acid polypeptide reads, in one-letter code: Calcium-dependent protein kinase 14 (522 aa).

2 stretches are compositionally biased toward low complexity: residues 1–12 and 19–45; these read MGNCCPPGSSSE and SSGSSRPAGSAGAAASPATISPSAAPA. The interval 1–58 is disordered; the sequence is MGNCCPPGSSSEPDPPPASSGSSRPAGSAGAAASPATISPSAAPAPAKPPAPIGPVLG. Gly-2 is lipidated: N-myristoyl glycine. Residues 68 to 326 form the Protein kinase domain; the sequence is YTVGKELGRG…AYDVLNHPWI (259 aa). Residues 74 to 82 and Lys-97 contribute to the ATP site; that span reads LGRGQFGVT. The Proton acceptor role is filled by Asp-192. An autoinhibitory domain region spans residues 332-362; the sequence is APDTPLDNAVLGRLKQFRAMNQFKKAALRVI. EF-hand domains lie at 369-404, 405-440, 441-476, and 480-511; these read EEIRGLKEMFKSMDSDNSGTITVDELRKGLAKKGTK, LTEAEVQQLMEAADADGNGTIDYEEFITATMHMNRM, DREEHLYTAFQYFDKDNSGYITIEELEQALREKGLM, and EIKDIISEVDADNDGRINYTEFVAMMRKGDPE. The Ca(2+) site is built by Asp-382, Asp-384, Ser-386, Thr-388, Glu-393, Asp-418, Asp-420, Asn-422, Thr-424, Glu-429, Asp-454, Asp-456, Ser-458, Tyr-460, Glu-465, Asp-489, Asp-491, Asp-493, Arg-495, and Glu-500.

It belongs to the protein kinase superfamily. Ser/Thr protein kinase family. CDPK subfamily.

The protein localises to the membrane. The catalysed reaction is L-seryl-[protein] + ATP = O-phospho-L-seryl-[protein] + ADP + H(+). The enzyme catalyses L-threonyl-[protein] + ATP = O-phospho-L-threonyl-[protein] + ADP + H(+). Activated by calcium. Autophosphorylation may play an important role in the regulation of the kinase activity. May play a role in signal transduction pathways that involve calcium as a second messenger. The sequence is that of Calcium-dependent protein kinase 14 from Oryza sativa subsp. japonica (Rice).